The sequence spans 43 residues: Protein PsbN (43 aa).

The helical transmembrane segment at 4–24 (AIVLSISMAAVVVAITGISIY) threads the bilayer.

It belongs to the PsbN family.

The protein localises to the cellular thylakoid membrane. In terms of biological role, may play a role in photosystem I and II biogenesis. The chain is Protein PsbN from Nostoc punctiforme (strain ATCC 29133 / PCC 73102).